Here is a 371-residue protein sequence, read N- to C-terminus: ADP-ribosylarginine hydrolase Tri1 (371 aa).

The N-terminal extension stretch occupies residues Met1–Pro61. The ADP-ribosyl hydrolase domain stretch occupies residues Gly70–Glu362. 5 residues coordinate Mg(2+): Thr112, Asp113, Asp114, Asp157, and Asp313.

This sequence belongs to the ADP-ribosylglycohydrolase family. Mg(2+) is required as a cofactor.

The catalysed reaction is N(omega)-(ADP-D-ribosyl)-L-arginyl-[protein] + H2O = ADP-D-ribose + L-arginyl-[protein]. Functionally, immunity component of an interbacterial competition system (also called effector-immunity systems). Expression in E.coli neutralizes the toxic effects of non-cognate S.proteamaculans effector protein Tre1 (Tre1-Sp); cannot be co-purified with Tre1-Sp from E.coli, suggesting they do not form a stable complex. Probably acts as an arginine mono-ADP-ribosylhydrolase, mediating the removal of mono-ADP-ribose attached to arginine residues on proteins. Probably de-ADP-ribosylates FtsZ and possibly other proteins; the ability to hydrolyze ADP-ribosyl moieties is not essential for neutralization of its cognate toxin, strongly suggesting its N-terminal extension occludes the active site of cognate toxin Tre1. The polypeptide is ADP-ribosylarginine hydrolase Tri1 (Pseudomonas putida (strain GB-1)).